The sequence spans 359 residues: Protein mab-21-like 2-B (359 aa).

The protein belongs to the mab-21 family.

The protein localises to the nucleus. It is found in the cytoplasm. Functionally, required for several aspects of embryonic development including normal development of the eye. The chain is Protein mab-21-like 2-B (mab21l2-b) from Xenopus laevis (African clawed frog).